A 137-amino-acid polypeptide reads, in one-letter code: Holo-[acyl-carrier-protein] synthase (137 aa).

Positions 8 and 57 each coordinate Mg(2+).

This sequence belongs to the P-Pant transferase superfamily. AcpS family. The cofactor is Mg(2+).

The protein resides in the cytoplasm. The catalysed reaction is apo-[ACP] + CoA = holo-[ACP] + adenosine 3',5'-bisphosphate + H(+). In terms of biological role, transfers the 4'-phosphopantetheine moiety from coenzyme A to a Ser of acyl-carrier-protein. The chain is Holo-[acyl-carrier-protein] synthase from Cereibacter sphaeroides (strain ATCC 17029 / ATH 2.4.9) (Rhodobacter sphaeroides).